A 149-amino-acid chain; its full sequence is MKTFTPKPADLTHDWYVIDATDVVLGRLATQAATLLRGKNKPTYAPHADSGNHVIILNADKIALTGNKLGKELYMHSGRPGGLRRDSYAQLLKTNPERIIKSAIKGMLPKNRLAKVQLDRLHIVRGAEHPYAGMKPQVFEIAQVSQQAK.

It belongs to the universal ribosomal protein uL13 family. Part of the 50S ribosomal subunit.

Functionally, this protein is one of the early assembly proteins of the 50S ribosomal subunit, although it is not seen to bind rRNA by itself. It is important during the early stages of 50S assembly. This Bifidobacterium adolescentis (strain ATCC 15703 / DSM 20083 / NCTC 11814 / E194a) protein is Large ribosomal subunit protein uL13.